The following is a 508-amino-acid chain: Photosystem II CP47 reaction center protein (508 aa).

6 helical membrane-spanning segments follow: residues 21–36 (SVHI…WAGS), 101–115 (IVFS…IWHW), 140–156 (GIHL…FGAF), 203–218 (IAAG…FHLS), 237–252 (VLSS…AFVV), and 457–472 (SFAL…HGAR).

This sequence belongs to the PsbB/PsbC family. PsbB subfamily. PSII is composed of 1 copy each of membrane proteins PsbA, PsbB, PsbC, PsbD, PsbE, PsbF, PsbH, PsbI, PsbJ, PsbK, PsbL, PsbM, PsbT, PsbX, PsbY, PsbZ, Psb30/Ycf12, at least 3 peripheral proteins of the oxygen-evolving complex and a large number of cofactors. It forms dimeric complexes. Binds multiple chlorophylls. PSII binds additional chlorophylls, carotenoids and specific lipids. serves as cofactor.

The protein localises to the plastid. The protein resides in the chloroplast thylakoid membrane. Functionally, one of the components of the core complex of photosystem II (PSII). It binds chlorophyll and helps catalyze the primary light-induced photochemical processes of PSII. PSII is a light-driven water:plastoquinone oxidoreductase, using light energy to abstract electrons from H(2)O, generating O(2) and a proton gradient subsequently used for ATP formation. This Atropa belladonna (Belladonna) protein is Photosystem II CP47 reaction center protein.